The primary structure comprises 394 residues: Elongation factor Tu 2 (394 aa).

Positions 10-204 constitute a tr-type G domain; the sequence is KPHVNVGTIG…ALDSYIPEPE (195 aa). The interval 19 to 26 is G1; sequence GHVDHGKT. 19–26 serves as a coordination point for GTP; it reads GHVDHGKT. Residue T26 coordinates Mg(2+). The interval 60–64 is G2; that stretch reads GITIS. Residues 81-84 are G3; that stretch reads DCPG. GTP contacts are provided by residues 81 to 85 and 136 to 139; these read DCPGH and NKCD. A G4 region spans residues 136–139; that stretch reads NKCD. Positions 174 to 176 are G5; sequence SAL.

It belongs to the TRAFAC class translation factor GTPase superfamily. Classic translation factor GTPase family. EF-Tu/EF-1A subfamily. As to quaternary structure, monomer.

It localises to the cytoplasm. The catalysed reaction is GTP + H2O = GDP + phosphate + H(+). Functionally, GTP hydrolase that promotes the GTP-dependent binding of aminoacyl-tRNA to the A-site of ribosomes during protein biosynthesis. The sequence is that of Elongation factor Tu 2 from Photorhabdus laumondii subsp. laumondii (strain DSM 15139 / CIP 105565 / TT01) (Photorhabdus luminescens subsp. laumondii).